The primary structure comprises 393 residues: S-adenosylmethionine synthase (393 aa).

An ATP-binding site is contributed by His-17. Asp-19 is a Mg(2+) binding site. K(+) is bound at residue Glu-45. Positions 58 and 106 each coordinate L-methionine. Residues 106–116 (QSAHIAQGVDA) form a flexible loop region. ATP contacts are provided by residues 171-173 (DAK), 237-238 (KF), Asp-246, 252-253 (RK), Ala-269, and Lys-273. Residue Asp-246 coordinates L-methionine. Lys-277 contributes to the L-methionine binding site.

It belongs to the AdoMet synthase family. Homotetramer; dimer of dimers. Mg(2+) serves as cofactor. The cofactor is K(+).

The protein localises to the cytoplasm. The enzyme catalyses L-methionine + ATP + H2O = S-adenosyl-L-methionine + phosphate + diphosphate. The protein operates within amino-acid biosynthesis; S-adenosyl-L-methionine biosynthesis; S-adenosyl-L-methionine from L-methionine: step 1/1. Catalyzes the formation of S-adenosylmethionine (AdoMet) from methionine and ATP. The overall synthetic reaction is composed of two sequential steps, AdoMet formation and the subsequent tripolyphosphate hydrolysis which occurs prior to release of AdoMet from the enzyme. The protein is S-adenosylmethionine synthase of Ruegeria sp. (strain TM1040) (Silicibacter sp.).